Reading from the N-terminus, the 357-residue chain is Phospho-N-acetylmuramoyl-pentapeptide-transferase (357 aa).

Helical transmembrane passes span A23–Y43, T70–L90, S91–I111, L127–I147, Y171–T191, G196–S216, L236–Y256, V260–L280, L286–I306, and L334–L354.

Belongs to the glycosyltransferase 4 family. MraY subfamily. The cofactor is Mg(2+).

It is found in the cell inner membrane. The catalysed reaction is UDP-N-acetyl-alpha-D-muramoyl-L-alanyl-gamma-D-glutamyl-meso-2,6-diaminopimeloyl-D-alanyl-D-alanine + di-trans,octa-cis-undecaprenyl phosphate = di-trans,octa-cis-undecaprenyl diphospho-N-acetyl-alpha-D-muramoyl-L-alanyl-D-glutamyl-meso-2,6-diaminopimeloyl-D-alanyl-D-alanine + UMP. The protein operates within cell wall biogenesis; peptidoglycan biosynthesis. Catalyzes the initial step of the lipid cycle reactions in the biosynthesis of the cell wall peptidoglycan: transfers peptidoglycan precursor phospho-MurNAc-pentapeptide from UDP-MurNAc-pentapeptide onto the lipid carrier undecaprenyl phosphate, yielding undecaprenyl-pyrophosphoryl-MurNAc-pentapeptide, known as lipid I. This chain is Phospho-N-acetylmuramoyl-pentapeptide-transferase, found in Buchnera aphidicola subsp. Acyrthosiphon pisum (strain 5A).